Here is a 440-residue protein sequence, read N- to C-terminus: Actin-like protein 7A (440 aa).

Positions 1 to 27 (MSLDAVWAPQTANIGDGPAKKASDQTS) are disordered. Positions 36 to 56 (ASLRDGPAKRAVWVRRDNAEK) are required for interaction with TES.

Belongs to the actin family. As to quaternary structure, interacts (via N-terminus) with TES (via LIM domain 2). Heterodimer with TES; the heterodimer interacts with ENAH to form a heterotrimer. Interacts with ACTL9. Interacts with CYLC1; the interaction may be relevant for proper acrosome attachment to the nuclear envelope. Detected in testis. Detected at the acrosome of round spermatids (at protein level).

Its subcellular location is the cytoplasm. It localises to the cytoskeleton. It is found in the golgi apparatus. The protein localises to the nucleus. Essential for normal spermatogenesis and male fertility. Required for normal sperm head morphology, acroplaxome formation, acrosome attachment, and acrosome granule stability. May anchor and stabilize acrosomal adherence to the acroplaxome at least in part by facilitating the presence of F-actin in the subacrosomal space. May play an important role in formation and fusion of Golgi-derived vesicles during acrosome biogenesis. This is Actin-like protein 7A (Actl7a) from Rattus norvegicus (Rat).